The chain runs to 90 residues: MSRTVFCQHLNKEADGLDFQLYPGELGKKIFDNISKEAWTEWQKKQTMLINEKKLNMMEPTARNFLETQMQAYLFEGKEPDIEGYVPPKS.

It belongs to the Fe(2+)-trafficking protein family.

Functionally, could be a mediator in iron transactions between iron acquisition and iron-requiring processes, such as synthesis and/or repair of Fe-S clusters in biosynthetic enzymes. The sequence is that of Probable Fe(2+)-trafficking protein from Pseudoalteromonas atlantica (strain T6c / ATCC BAA-1087).